Consider the following 227-residue polypeptide: MKNIYKISWLDFFLIEKKKEYFLYLLNKIKNIRRNTIVYPKKNMVFNAFLFTPLSSIKVVILGQDPYHSAGQAHGLSFSVPKGVFLPPSLKNIFIELKNNFSFYKKNIHGCLESWAKQGVFLLNSILTVSKGIPNSHKNLGWEIFTDQVIKFISDICKGVVFLLWGNISQKKYYLIDSKKHFILRSTHPSPLSCYKGFFGCNHFFKTNVLLQNQKKKPINWFLDLFE.

D65 serves as the catalytic Proton acceptor.

Belongs to the uracil-DNA glycosylase (UDG) superfamily. UNG family.

The protein localises to the cytoplasm. The enzyme catalyses Hydrolyzes single-stranded DNA or mismatched double-stranded DNA and polynucleotides, releasing free uracil.. Functionally, excises uracil residues from the DNA which can arise as a result of misincorporation of dUMP residues by DNA polymerase or due to deamination of cytosine. This Buchnera aphidicola subsp. Cinara cedri (strain Cc) protein is Uracil-DNA glycosylase.